Consider the following 103-residue polypeptide: Co-chaperonin GroES (103 aa).

The protein belongs to the GroES chaperonin family. Heptamer of 7 subunits arranged in a ring. Interacts with the chaperonin GroEL.

The protein resides in the cytoplasm. In terms of biological role, together with the chaperonin GroEL, plays an essential role in assisting protein folding. The GroEL-GroES system forms a nano-cage that allows encapsulation of the non-native substrate proteins and provides a physical environment optimized to promote and accelerate protein folding. GroES binds to the apical surface of the GroEL ring, thereby capping the opening of the GroEL channel. The sequence is that of Co-chaperonin GroES from Synechococcus sp. (strain CC9902).